The chain runs to 373 residues: XK-related protein 9 (373 aa).

The next 8 membrane-spanning stretches (helical) occupy residues 8 to 28, 38 to 58, 166 to 186, 203 to 223, 224 to 244, 256 to 276, 295 to 315, and 318 to 338; these read FMMSVLGIIIYVTDLIVDIWV, YVFSALALSFMLFGTLVAQCF, AAIMVSCCAISWSTVDYQVAL, ITYLFYKLFTLLSWMLSVVLL, LFLNVKIALFLLLFLWLLGII, CISMEFLYRIVVGFILIFTFF, VLGTLGILTVFWVCPLNIFNP, and FIPISITIVLTLLLGILFLIV.

The protein belongs to the XK family. Undergoes proteolytic processing by caspase-3 (CASP3), caspase-6 (CASP6) and caspase-7 (CASP7) to generate the XK-related protein 9, processed form, leading to its activation.

The protein localises to the cell membrane. It catalyses the reaction a 1,2-diacyl-sn-glycero-3-phospho-L-serine(in) = a 1,2-diacyl-sn-glycero-3-phospho-L-serine(out). Its activity is regulated as follows. Activated upon caspase cleavage to generate the XK-related protein 9, processed form. Does not act prior the onset of apoptosis. In terms of biological role, phospholipid scramblase that promotes phosphatidylserine exposure on apoptotic cell surface. Phosphatidylserine is a specific marker only present at the surface of apoptotic cells and acts as a specific signal for engulfment. The protein is XK-related protein 9 of Pan troglodytes (Chimpanzee).